We begin with the raw amino-acid sequence, 327 residues long: G protein pathway suppressor 2 (327 aa).

Residues 14 to 109 (MARALHRHIM…RRRKEQSDLT (96 aa)) are a coiled coil. Residues 26–65 (RERKRQEEEEVDKMMEQKMKEEQERRKKKEMEERMSLEET) form a disordered region. Glycyl lysine isopeptide (Lys-Gly) (interchain with G-Cter in SUMO1) cross-links involve residues Lys-45 and Lys-71. The tract at residues 61 to 94 (SLEETKEQILKLQEKLSALQEEKHQLFLQLKKVL) is interaction with SUMO. Disordered stretches follow at residues 178–208 (GQFQ…SPSQ), 253–285 (QKQM…APGL), and 300–327 (KSGF…FYHK). Residues 253–271 (QKQMEHANQQTSFSDSSSL) are compositionally biased toward polar residues. Arg-312 bears the Asymmetric dimethylarginine mark. Residues 317-327 (QHSQNPRFYHK) show a composition bias toward polar residues. Arg-323 carries the post-translational modification Asymmetric dimethylarginine; alternate. Arg-323 is subject to Omega-N-methylarginine; alternate.

Component of the N-Cor repressor complex, at least composed of NCOR1, NCOR2, HDAC3, TBL1X, TBL1R, CORO2A and GPS2. Interacts (when sumoylated at Lys-71) with TBL1X; leading to protect GPS2 from degradation by the proteasome. Interacts with UBE2N; leading to inhibit UBE2N/Ubc13 activity. Interacts with TRAF1. Interacts with TRAF2. Interacts with TRAF6. Interacts with PPARG (when in the liganded conformation). Interacts with (sumoylated) NR1H2; interaction with sumoylated NR1H2 and NR5A2 onto hepatic acute phase protein promoters prevents N-Cor corepressor complex dissociation. Interacts with (sumoylated) NR5A2; interaction with sumoylated NR1H2 and NR5A2 onto hepatic acute phase protein promoters prevents N-Cor corepressor complex dissociation. Interacts with NR1H3. Interacts with RFX4. Interacts with ANKRD26. Sumoylation regulates its subcellular location. Sumoylation at Lys-45 and Lys-71 regulates the shuttling between the cytoplasm and the nucleus. Sumoylation at Lys-71 is required for interaction with TBL1X. Sumoylated at Lys-45 and Lys-71 in mitochondrion. Desumoylation by SENP1 leads to relocation from the mitochondria to the nucleus. Post-translationally, ubiquitinated at the C-terminus by SIAH2; leading to its degradation by the proteasome. Interaction with TBL1X and methylation at Arg-323 protect GPS2 against ubiquitination and degradation. In terms of processing, methylated at Arg-312 and Arg-323 by PRMT6. Methylation at Arg-323 protects from degradation by the proteasome.

The protein localises to the nucleus. It localises to the mitochondrion. The protein resides in the cytoplasm. Its subcellular location is the cytosol. In terms of biological role, key regulator of inflammation, lipid metabolism and mitochondrion homeostasis that acts by inhibiting the activity of the ubiquitin-conjugating enzyme UBE2N/Ubc13, thereby inhibiting 'Lys-63'-linked ubiquitination. In the nucleus, can both acts as a corepressor and coactivator of transcription, depending on the context. Acts as a transcription coactivator in adipocytes by promoting the recruitment of PPARG to promoters: acts by inhibiting the activity of the ubiquitin-conjugating enzyme UBE2N/Ubc13, leading to stabilization of KDM4A and subsequent histone H3 'Lys-9' (H3K9) demethylation. Promotes cholesterol efflux by acting as a transcription coactivator. Acts as a regulator of B-cell development by inhibiting UBE2N/Ubc13, thereby restricting the activation of Toll-like receptors (TLRs) and B-cell antigen receptors (BCRs) signaling pathways. Acts as a key mediator of mitochondrial stress response: in response to mitochondrial depolarization, relocates from the mitochondria to the nucleus following desumoylation and specifically promotes expression of nuclear-encoded mitochondrial genes. Promotes transcription of nuclear-encoded mitochondrial genes by inhibiting UBE2N/Ubc13. Can also act as a corepressor as part of the N-Cor repressor complex by repressing active PPARG. Plays an anti-inflammatory role in macrophages and is required for insulin sensitivity by acting as a corepressor. Plays an anti-inflammatory role during the hepatic acute phase response by interacting with sumoylated NR1H2 and NR5A2 proteins, thereby preventing N-Cor corepressor complex dissociation. In the cytosol, also plays a non-transcriptional role by regulating insulin signaling and pro-inflammatory pathways. In the cytoplasm, acts as a negative regulator of inflammation by inhibiting the pro-inflammatory TNF-alpha pathway; acts by repressing UBE2N/Ubc13 activity. In the cytoplasm of adipocytes, restricts the activation of insulin signaling via inhibition of UBE2N/Ubc13-mediated ubiquitination of AKT. Able to suppress G-protein- and mitogen-activated protein kinase-mediated signal transduction. This chain is G protein pathway suppressor 2, found in Mus musculus (Mouse).